The primary structure comprises 270 residues: Putative envelope-preserving system protein Rv2743c (270 aa).

A run of 2 helical transmembrane segments spans residues 50 to 72 (ALRW…ALLA) and 77 to 99 (FTSL…TLLL).

As to quaternary structure, interacts with PspA and Rv2742c.

It is found in the membrane. In terms of biological role, involved in preservation of envelope integrity and tolerance to surface stress. Reverses the inhibitory effect of PspA on ClgR activity. Facilitates intracellular growth of M.tuberculosis. In Mycobacterium tuberculosis (strain ATCC 25618 / H37Rv), this protein is Putative envelope-preserving system protein Rv2743c.